Consider the following 401-residue polypeptide: LL-diaminopimelate aminotransferase (401 aa).

The substrate site is built by Tyr-15 and Gly-42. Pyridoxal 5'-phosphate is bound by residues Tyr-72, 108-109 (AK), Tyr-132, Asn-176, Tyr-207, and 235-237 (SFS). 3 residues coordinate substrate: Lys-109, Tyr-132, and Asn-176. Lys-238 bears the N6-(pyridoxal phosphate)lysine mark. Positions 246 and 281 each coordinate pyridoxal 5'-phosphate. Substrate is bound by residues Asn-281 and Arg-377.

It belongs to the class-I pyridoxal-phosphate-dependent aminotransferase family. LL-diaminopimelate aminotransferase subfamily. As to quaternary structure, homodimer. Pyridoxal 5'-phosphate is required as a cofactor.

It carries out the reaction (2S,6S)-2,6-diaminopimelate + 2-oxoglutarate = (S)-2,3,4,5-tetrahydrodipicolinate + L-glutamate + H2O + H(+). It functions in the pathway amino-acid biosynthesis; L-lysine biosynthesis via DAP pathway; LL-2,6-diaminopimelate from (S)-tetrahydrodipicolinate (aminotransferase route): step 1/1. Functionally, involved in the synthesis of meso-diaminopimelate (m-DAP or DL-DAP), required for both lysine and peptidoglycan biosynthesis. Catalyzes the direct conversion of tetrahydrodipicolinate to LL-diaminopimelate. The sequence is that of LL-diaminopimelate aminotransferase from Azobacteroides pseudotrichonymphae genomovar. CFP2.